Reading from the N-terminus, the 312-residue chain is Olfactory receptor 5J2 (312 aa).

The Extracellular segment spans residues 1–25 (MADDNFTVVTEFILLGLTDHAELKA). N-linked (GlcNAc...) asparagine glycosylation occurs at N5. The helical transmembrane segment at 26-46 (VLFVVFLVIYAITLLRNLGMI) threads the bilayer. Residues 47–54 (LLIQITSK) lie on the Cytoplasmic side of the membrane. The chain crosses the membrane as a helical span at residues 55–75 (LHTPMYFLLSCLSFVDACYSS). Topologically, residues 76–99 (AIAPKMLVNLLVVKATISFSACMV) are extracellular. Cysteines 97 and 189 form a disulfide. A helical membrane pass occupies residues 100-120 (QHLCFGVFITTEGFLLSVMAY). The Cytoplasmic segment spans residues 121-139 (DRYVAIVSPLLYTVAMSDR). The chain crosses the membrane as a helical span at residues 140–160 (KCVELVTGSWIGGIVNTLIHT). The Extracellular segment spans residues 161 to 196 (ISLRRLSFCRLNAVSHFFCDIPSLLKLSCSDTSMNE). A helical transmembrane segment spans residues 197 to 217 (LLLLTFSGVIAMATFLTVIIS). The Cytoplasmic segment spans residues 218-237 (YIFIAFASLRIHSASGRQQA). The helical transmembrane segment at 238 to 258 (FSTCASHLTAVTIFYGTLIFS) threads the bilayer. Residues 259–271 (YIQPSSQYFVEQE) lie on the Extracellular side of the membrane. The chain crosses the membrane as a helical span at residues 272–292 (KVVSMFYTLGIPMLNLLIHSL). Residues 293–312 (RNKDVKEAVKRAIEMKHFLC) lie on the Cytoplasmic side of the membrane.

The protein belongs to the G-protein coupled receptor 1 family.

The protein localises to the cell membrane. In terms of biological role, odorant receptor. This is Olfactory receptor 5J2 (OR5J2) from Homo sapiens (Human).